Here is a 340-residue protein sequence, read N- to C-terminus: Glyceraldehyde-3-phosphate dehydrogenase (340 aa).

NAD(+) contacts are provided by residues 11–12 (TI) and Gly-109. Residue 138–140 (SCN) participates in D-glyceraldehyde 3-phosphate binding. Cys-139 functions as the Nucleophile in the catalytic mechanism. NAD(+) is bound at residue Arg-167. Residue 193–194 (HA) coordinates D-glyceraldehyde 3-phosphate. Gln-300 is a binding site for NAD(+).

The protein belongs to the glyceraldehyde-3-phosphate dehydrogenase family. In terms of assembly, homotetramer.

It is found in the cytoplasm. The catalysed reaction is D-glyceraldehyde 3-phosphate + phosphate + NADP(+) = (2R)-3-phospho-glyceroyl phosphate + NADPH + H(+). It carries out the reaction D-glyceraldehyde 3-phosphate + phosphate + NAD(+) = (2R)-3-phospho-glyceroyl phosphate + NADH + H(+). The protein operates within carbohydrate degradation; glycolysis; pyruvate from D-glyceraldehyde 3-phosphate: step 1/5. This chain is Glyceraldehyde-3-phosphate dehydrogenase, found in Saccharolobus islandicus (strain Y.N.15.51 / Yellowstone #2) (Sulfolobus islandicus).